The chain runs to 400 residues: Queuine tRNA-ribosyltransferase catalytic subunit (400 aa).

Residue D89 is the Proton acceptor of the active site. Residues 89 to 93 (DSGGF), D143, Q185, and G212 contribute to the substrate site. The segment at 243–249 (GVGFPVD) is RNA binding. Catalysis depends on D262, which acts as the Nucleophile. Positions 267–271 (TRTAR) are RNA binding; important for wobble base 34 recognition. Positions 301, 303, 306, and 331 each coordinate Zn(2+).

It belongs to the queuine tRNA-ribosyltransferase family. In terms of assembly, heterodimer of a catalytic subunit and an accessory subunit. Zn(2+) is required as a cofactor.

Its subcellular location is the cytoplasm. The catalysed reaction is guanosine(34) in tRNA + queuine = queuosine(34) in tRNA + guanine. Its function is as follows. Catalytic subunit of the queuine tRNA-ribosyltransferase (TGT) that catalyzes the base-exchange of a guanine (G) residue with queuine (Q) at position 34 (anticodon wobble position) in tRNAs with GU(N) anticodons (tRNA-Asp, -Asn, -His and -Tyr), resulting in the hypermodified nucleoside queuosine (7-(((4,5-cis-dihydroxy-2-cyclopenten-1-yl)amino)methyl)-7-deazaguanosine). Catalysis occurs through a double-displacement mechanism. The nucleophile active site attacks the C1' of nucleotide 34 to detach the guanine base from the RNA, forming a covalent enzyme-RNA intermediate. The proton acceptor active site deprotonates the incoming queuine, allowing a nucleophilic attack on the C1' of the ribose to form the product. This is Queuine tRNA-ribosyltransferase catalytic subunit from Caenorhabditis elegans.